Consider the following 258-residue polypeptide: Adenylate kinase (258 aa).

52-57 (GAGKGT) provides a ligand contact to ATP. The segment at 72–101 (ATGDMLRSQVAKKTALGKEAKKIMDQGGLV) is NMP. AMP contacts are provided by residues threonine 73, arginine 78, 99-101 (GLV), 128-131 (GFPR), and glutamine 135. The tract at residues 169–206 (GRLVHPASGRSYHKIFNPPKEEMKDDVTGEPLIQRSDD) is LID. ATP-binding positions include arginine 170 and 179-180 (SY). Residues arginine 203 and arginine 214 each coordinate AMP. Glutamine 242 lines the ATP pocket.

Belongs to the adenylate kinase family. AK2 subfamily. Monomer.

The protein resides in the cytoplasm. The protein localises to the cytosol. Its subcellular location is the mitochondrion intermembrane space. The catalysed reaction is AMP + ATP = 2 ADP. In terms of biological role, catalyzes the reversible transfer of the terminal phosphate group between ATP and AMP. Plays an important role in cellular energy homeostasis and in adenine nucleotide metabolism. Adenylate kinase activity is critical for regulation of the phosphate utilization and the AMP de novo biosynthesis pathways. This chain is Adenylate kinase (adk1), found in Aspergillus niger (strain ATCC MYA-4892 / CBS 513.88 / FGSC A1513).